Reading from the N-terminus, the 385-residue chain is Calcium/calmodulin-dependent protein kinase type 1D (385 aa).

The region spanning Phe-23 to Ile-279 is the Protein kinase domain. ATP is bound by residues Leu-29–Val-37 and Lys-52. Lys-113 participates in a covalent cross-link: Glycyl lysine isopeptide (Lys-Gly) (interchain with G-Cter in SUMO2). Ser-122 bears the Phosphoserine mark. The active-site Proton acceptor is the Asp-144. Phosphothreonine; by CaMKK1 and CaMKK2 is present on Thr-180. The autoinhibitory domain stretch occupies residues Ile-279–Met-319. A calmodulin-binding region spans residues Lys-299 to Arg-320. The Nuclear export signal motif lies at His-318 to Leu-324. Residues Ser-360–Lys-385 are disordered. The span at Thr-375–Lys-385 shows a compositional bias: polar residues.

Belongs to the protein kinase superfamily. CAMK Ser/Thr protein kinase family. CaMK subfamily. Widely expressed. Highly and mostly expressed in polymorphonuclear leukocytes (neutrophilic and eosinophilic granulocytes) while little or no expression is observed in monocytes and lymphocytes.

It is found in the cytoplasm. It localises to the nucleus. The catalysed reaction is L-seryl-[protein] + ATP = O-phospho-L-seryl-[protein] + ADP + H(+). It carries out the reaction L-threonyl-[protein] + ATP = O-phospho-L-threonyl-[protein] + ADP + H(+). Its activity is regulated as follows. Activated by Ca(2+)/calmodulin. Binding of calmodulin results in conformational change that relieves intrasteric autoinhibition and allows phosphorylation of Thr-180 within the activation loop by CaMKK1 or CaMKK2. Phosphorylation of Thr-180 results in several fold increase in total activity. Unlike CaMK4, may be unable to exhibit autonomous activity after Ca(2+)/calmodulin activation. In terms of biological role, calcium/calmodulin-dependent protein kinase that operates in the calcium-triggered CaMKK-CaMK1 signaling cascade and, upon calcium influx, activates CREB-dependent gene transcription, regulates calcium-mediated granulocyte function and respiratory burst and promotes basal dendritic growth of hippocampal neurons. In neutrophil cells, required for cytokine-induced proliferative responses and activation of the respiratory burst. Activates the transcription factor CREB1 in hippocampal neuron nuclei. May play a role in apoptosis of erythroleukemia cells. In vitro, phosphorylates transcription factor CREM isoform Beta. This is Calcium/calmodulin-dependent protein kinase type 1D (CAMK1D) from Homo sapiens (Human).